Consider the following 454-residue polypeptide: Bifunctional protein GlmU (454 aa).

Residues 1 to 226 form a pyrophosphorylase region; the sequence is MSTTVIILAA…AFEVEGVNDR (226 aa). Residues 8–11, K22, Q73, 78–79, 100–102, G137, E151, N166, and N224 contribute to the UDP-N-acetyl-alpha-D-glucosamine site; these read LAAG, GT, and YGD. Residue D102 coordinates Mg(2+). Residue N224 participates in Mg(2+) binding. A linker region spans residues 227–247; that stretch reads LQLAALEREFQKQQAKELMQQ. The tract at residues 248–454 is N-acetyltransferase; that stretch reads GVTFADPARF…NYQRPQKLKK (207 aa). Residues R330 and K348 each contribute to the UDP-N-acetyl-alpha-D-glucosamine site. The Proton acceptor role is filled by H360. UDP-N-acetyl-alpha-D-glucosamine is bound by residues Y363 and N374. Residues A377, 383–384, S402, A420, and R437 each bind acetyl-CoA; that span reads NY.

It in the N-terminal section; belongs to the N-acetylglucosamine-1-phosphate uridyltransferase family. In the C-terminal section; belongs to the transferase hexapeptide repeat family. Homotrimer. The cofactor is Mg(2+).

The protein localises to the cytoplasm. The catalysed reaction is alpha-D-glucosamine 1-phosphate + acetyl-CoA = N-acetyl-alpha-D-glucosamine 1-phosphate + CoA + H(+). The enzyme catalyses N-acetyl-alpha-D-glucosamine 1-phosphate + UTP + H(+) = UDP-N-acetyl-alpha-D-glucosamine + diphosphate. The protein operates within nucleotide-sugar biosynthesis; UDP-N-acetyl-alpha-D-glucosamine biosynthesis; N-acetyl-alpha-D-glucosamine 1-phosphate from alpha-D-glucosamine 6-phosphate (route II): step 2/2. It functions in the pathway nucleotide-sugar biosynthesis; UDP-N-acetyl-alpha-D-glucosamine biosynthesis; UDP-N-acetyl-alpha-D-glucosamine from N-acetyl-alpha-D-glucosamine 1-phosphate: step 1/1. It participates in bacterial outer membrane biogenesis; LPS lipid A biosynthesis. Functionally, catalyzes the last two sequential reactions in the de novo biosynthetic pathway for UDP-N-acetylglucosamine (UDP-GlcNAc). The C-terminal domain catalyzes the transfer of acetyl group from acetyl coenzyme A to glucosamine-1-phosphate (GlcN-1-P) to produce N-acetylglucosamine-1-phosphate (GlcNAc-1-P), which is converted into UDP-GlcNAc by the transfer of uridine 5-monophosphate (from uridine 5-triphosphate), a reaction catalyzed by the N-terminal domain. The chain is Bifunctional protein GlmU from Acinetobacter baumannii (strain AYE).